Consider the following 253-residue polypeptide: Redox-sensing transcriptional repressor Rex (253 aa).

The H-T-H motif DNA-binding region spans 26–65 (LYLRALTALSERSVPTVSSEELATAAGVNSAKLRKDFSYL). 100–105 (GIGNLG) is an NAD(+) binding site. The tract at residues 217 to 253 (RKAGEDSAAEDEGAPPMRATPASRKGPDGDMPAVMPA) is disordered.

Belongs to the transcriptional regulatory Rex family. As to quaternary structure, homodimer.

The protein resides in the cytoplasm. Functionally, modulates transcription in response to changes in cellular NADH/NAD(+) redox state. In Streptomyces griseus subsp. griseus (strain JCM 4626 / CBS 651.72 / NBRC 13350 / KCC S-0626 / ISP 5235), this protein is Redox-sensing transcriptional repressor Rex.